The sequence spans 387 residues: ATP phosphoribosyltransferase regulatory subunit (387 aa).

Belongs to the class-II aminoacyl-tRNA synthetase family. HisZ subfamily. In terms of assembly, heteromultimer composed of HisG and HisZ subunits.

Its subcellular location is the cytoplasm. Its pathway is amino-acid biosynthesis; L-histidine biosynthesis; L-histidine from 5-phospho-alpha-D-ribose 1-diphosphate: step 1/9. Functionally, required for the first step of histidine biosynthesis. May allow the feedback regulation of ATP phosphoribosyltransferase activity by histidine. The protein is ATP phosphoribosyltransferase regulatory subunit of Ralstonia pickettii (strain 12J).